Consider the following 157-residue polypeptide: Protein NrdI (157 aa).

The protein belongs to the NrdI family.

In terms of biological role, probably involved in ribonucleotide reductase function. This is Protein NrdI from Mycoplasma capricolum subsp. capricolum (strain California kid / ATCC 27343 / NCTC 10154).